A 549-amino-acid chain; its full sequence is Chaperonin GroEL (549 aa).

Residues 30 to 33 (TLGP), K51, 87 to 91 (DGTTT), G415, and D495 each bind ATP.

The protein belongs to the chaperonin (HSP60) family. Forms a cylinder of 14 subunits composed of two heptameric rings stacked back-to-back. Interacts with the co-chaperonin GroES.

The protein localises to the cytoplasm. It catalyses the reaction ATP + H2O + a folded polypeptide = ADP + phosphate + an unfolded polypeptide.. Together with its co-chaperonin GroES, plays an essential role in assisting protein folding. The GroEL-GroES system forms a nano-cage that allows encapsulation of the non-native substrate proteins and provides a physical environment optimized to promote and accelerate protein folding. The protein is Chaperonin GroEL of Colwellia maris.